A 1091-amino-acid chain; its full sequence is Constitutive coactivator of PPAR-gamma-like protein 2 (1091 aa).

Low complexity predominate over residues 35–53 (QQQHLHRQLPPAALAPGAP). Disordered regions lie at residues 35-105 (QQQH…HPPP), 503-575 (NCLT…SEPH), 966-1010 (SRSS…QGSS), and 1037-1077 (VEEK…KNHV). At Arg-57 the chain carries Omega-N-methylarginine. A compositionally biased stretch (basic residues) spans 82-95 (SRHHHPAHHFHHHG). The span at 532–544 (GSEQITEAVQQQP) shows a compositional bias: polar residues. Residues 966–976 (SRSSRSRGSFG) are compositionally biased toward low complexity. At Arg-972 the chain carries Omega-N-methylarginine. Basic and acidic residues predominate over residues 1062-1077 (SDDHCLPVKNGEKNHV).

This sequence belongs to the constitutive coactivator of PPAR-gamma family.

The sequence is that of Constitutive coactivator of PPAR-gamma-like protein 2 (Fam120c) from Mus musculus (Mouse).